The primary structure comprises 264 residues: Thymidylate synthase (264 aa).

A dUMP-binding site is contributed by arginine 21. Histidine 51 contributes to the (6R)-5,10-methylene-5,6,7,8-tetrahydrofolate binding site. DUMP is bound at residue 126 to 127 (RR). Residue cysteine 146 is the Nucleophile of the active site. Residues 166 to 169 (RSCD), asparagine 177, and 207 to 209 (HLY) each bind dUMP. Aspartate 169 provides a ligand contact to (6R)-5,10-methylene-5,6,7,8-tetrahydrofolate. Position 263 (alanine 263) interacts with (6R)-5,10-methylene-5,6,7,8-tetrahydrofolate.

It belongs to the thymidylate synthase family. Bacterial-type ThyA subfamily. As to quaternary structure, homodimer.

The protein localises to the cytoplasm. It catalyses the reaction dUMP + (6R)-5,10-methylene-5,6,7,8-tetrahydrofolate = 7,8-dihydrofolate + dTMP. The protein operates within pyrimidine metabolism; dTTP biosynthesis. Catalyzes the reductive methylation of 2'-deoxyuridine-5'-monophosphate (dUMP) to 2'-deoxythymidine-5'-monophosphate (dTMP) while utilizing 5,10-methylenetetrahydrofolate (mTHF) as the methyl donor and reductant in the reaction, yielding dihydrofolate (DHF) as a by-product. This enzymatic reaction provides an intracellular de novo source of dTMP, an essential precursor for DNA biosynthesis. The chain is Thymidylate synthase from Salmonella paratyphi C (strain RKS4594).